A 356-amino-acid polypeptide reads, in one-letter code: 3,4-dihydroxy-2-butanone 4-phosphate synthase (356 aa).

A DHBP synthase region spans residues methionine 1 to methionine 211. Residues arginine 38–glutamate 39, aspartate 43, arginine 150–threonine 154, and glutamate 174 contribute to the D-ribulose 5-phosphate site. Residue glutamate 39 coordinates Mg(2+). Residue histidine 153 participates in Mg(2+) binding. Residues asparagine 212 to alanine 356 form a GTP cyclohydrolase II-like region.

The protein in the N-terminal section; belongs to the DHBP synthase family. In the C-terminal section; belongs to the GTP cyclohydrolase II family. It depends on Mg(2+) as a cofactor. Mn(2+) serves as cofactor.

The enzyme catalyses D-ribulose 5-phosphate = (2S)-2-hydroxy-3-oxobutyl phosphate + formate + H(+). It functions in the pathway cofactor biosynthesis; riboflavin biosynthesis; 2-hydroxy-3-oxobutyl phosphate from D-ribulose 5-phosphate: step 1/1. Functionally, catalyzes the conversion of D-ribulose 5-phosphate to formate and 3,4-dihydroxy-2-butanone 4-phosphate. The polypeptide is 3,4-dihydroxy-2-butanone 4-phosphate synthase (ribB) (Sulfurospirillum multivorans (Dehalospirillum multivorans)).